Here is a 268-residue protein sequence, read N- to C-terminus: AB hydrolase superfamily protein YisY (268 aa).

An AB hydrolase-1 domain is found at 23–254; sequence PIIFLHGWPL…NSGHGAFYEE (232 aa). Active-site residues include Ser-96, Asp-220, and His-248.

Belongs to the AB hydrolase superfamily.

The protein is AB hydrolase superfamily protein YisY (yisY) of Bacillus subtilis (strain 168).